We begin with the raw amino-acid sequence, 80 residues long: FXYD domain-containing ion transport regulator 7 (80 aa).

Topologically, residues 1 to 22 are extracellular; that stretch reads MATPTQSPTNVPEETDPFFYDY. Residues threonine 3, threonine 5, and threonine 9 are each glycosylated (O-linked (GlcNAc) threonine). The chain crosses the membrane as a helical span at residues 23 to 45; sequence ATVQTVGMTLATIMFVLGIIIII. Residues 46-80 are Cytoplasmic-facing; it reads SKKVKCRKADSRSESPTCKSCKSELPSSAPGGGGV. Residues 56–80 form a disordered region; sequence SRSESPTCKSCKSELPSSAPGGGGV. Serine 73 is subject to Phosphoserine.

The protein belongs to the FXYD family. In terms of assembly, regulatory subunit of the sodium/potassium-transporting ATPase which is composed of a catalytic alpha subunit, a non-catalytic beta subunit and an additional regulatory subunit. The regulatory subunit, a member of the FXYD protein family, modulates the enzymatic activity in a tissue- and isoform-specific way by changing affinities of the Na+/K+-ATPase toward Na(+), K(+) or ATP. In terms of processing, O-glycosylated; required for stabilization and translocation to the plasma membrane. As to expression, expressed specifically in brain. Expressed in both neurons and glia.

The protein localises to the cell membrane. Its function is as follows. Associates with and regulates the activity of the sodium/potassium-transporting ATPase (NKA) which catalyzes the hydrolysis of ATP coupled with the exchange of Na(+) and K(+) ions across the plasma membrane. Reduces the apparent affinity for external K(+), an effect that depends on the presence of external Na(+) and voltage. Increases the apparent affinity for intracellular Na(+). This is FXYD domain-containing ion transport regulator 7 (Fxyd7) from Rattus norvegicus (Rat).